A 518-amino-acid chain; its full sequence is MFS-type transporter cnsO (518 aa).

Polar residues predominate over residues 1-13 (MESTDSSPPLSMT). A disordered region spans residues 1-24 (MESTDSSPPLSMTDTEKKGDAVTT). The next 9 helical transmembrane spans lie at 99–119 (LALMYFFFTYGLSEPVSNIML), 122–142 (VGPKIWFPFIVCAWGLITTLT), 156–176 (LMLGITEAGLYPGAYFILSMW), 187–207 (AIFYGANTTAGAFGGVIAYGV), 221–241 (WLFLIEGCITIFAGLACLFCL), 298–318 (FMMMLFWWGGSVPTYSLSYTL), 334–354 (VMTTPPYIFATCVCVAVGYIS), 362–382 (LCIMGAYTLGLIGIIILWITV), and 392–412 (YFAIFLAAAGYSAQAPIVGAW). A glycan (N-linked (GlcNAc...) asparagine) is linked at Asn-416. Helical transmembrane passes span 427-447 (IGLLMLLGSVGGGSIGSNIYI) and 455-475 (PLGFGFSVGATVLGAMIPATI).

Belongs to the major facilitator superfamily.

It is found in the cell membrane. Its function is as follows. MFS-type transporter; part of the gene cluster that mediates the biosynthesis of communesins, a prominent class of indole alkaloids with great potential as pharmaceuticals. With the MFS transporter cnsL, is most likely responsible for cummunesins secretion and thereby may contribute to intrinsic resistance. This Penicillium expansum (Blue mold rot fungus) protein is MFS-type transporter cnsO.